The chain runs to 137 residues: Small ribosomal subunit protein uS12 (137 aa).

Positions 1 to 24 (MPTINQLVRKGRRSQSSKSKAPAL) are disordered. Asp102 carries the post-translational modification 3-methylthioaspartic acid.

Belongs to the universal ribosomal protein uS12 family. Part of the 30S ribosomal subunit. Contacts proteins S8 and S17. May interact with IF1 in the 30S initiation complex.

Functionally, with S4 and S5 plays an important role in translational accuracy. Its function is as follows. Interacts with and stabilizes bases of the 16S rRNA that are involved in tRNA selection in the A site and with the mRNA backbone. Located at the interface of the 30S and 50S subunits, it traverses the body of the 30S subunit contacting proteins on the other side and probably holding the rRNA structure together. The combined cluster of proteins S8, S12 and S17 appears to hold together the shoulder and platform of the 30S subunit. This Pediococcus pentosaceus (strain ATCC 25745 / CCUG 21536 / LMG 10740 / 183-1w) protein is Small ribosomal subunit protein uS12.